The sequence spans 165 residues: UPF0303 protein Bcenmc03_1534 (165 aa).

This sequence belongs to the UPF0303 family.

The protein is UPF0303 protein Bcenmc03_1534 of Burkholderia orbicola (strain MC0-3).